A 188-amino-acid chain; its full sequence is dCTP deaminase (188 aa).

Residues 111-116 (KSTYAR), 135-137 (TLE), glutamine 156, tyrosine 170, and glutamine 180 each bind dCTP. Residue glutamate 137 is the Proton donor/acceptor of the active site.

It belongs to the dCTP deaminase family. As to quaternary structure, homotrimer.

It carries out the reaction dCTP + H2O + H(+) = dUTP + NH4(+). The protein operates within pyrimidine metabolism; dUMP biosynthesis; dUMP from dCTP (dUTP route): step 1/2. Catalyzes the deamination of dCTP to dUTP. The protein is dCTP deaminase of Cupriavidus necator (strain ATCC 17699 / DSM 428 / KCTC 22496 / NCIMB 10442 / H16 / Stanier 337) (Ralstonia eutropha).